Consider the following 187-residue polypeptide: UPF0301 protein plu1183 (187 aa).

This sequence belongs to the UPF0301 (AlgH) family.

In Photorhabdus laumondii subsp. laumondii (strain DSM 15139 / CIP 105565 / TT01) (Photorhabdus luminescens subsp. laumondii), this protein is UPF0301 protein plu1183.